Reading from the N-terminus, the 208-residue chain is Uracil phosphoribosyltransferase (208 aa).

5-phospho-alpha-D-ribose 1-diphosphate-binding positions include arginine 77, arginine 102, and 128–136; that span reads DPMLATGGT. Residues isoleucine 191 and 196 to 198 contribute to the uracil site; that span reads GDI. Aspartate 197 lines the 5-phospho-alpha-D-ribose 1-diphosphate pocket.

This sequence belongs to the UPRTase family. Mg(2+) is required as a cofactor.

It carries out the reaction UMP + diphosphate = 5-phospho-alpha-D-ribose 1-diphosphate + uracil. Its pathway is pyrimidine metabolism; UMP biosynthesis via salvage pathway; UMP from uracil: step 1/1. Allosterically activated by GTP. Functionally, catalyzes the conversion of uracil and 5-phospho-alpha-D-ribose 1-diphosphate (PRPP) to UMP and diphosphate. The chain is Uracil phosphoribosyltransferase from Aquifex aeolicus (strain VF5).